We begin with the raw amino-acid sequence, 273 residues long: 3-methyl-2-oxobutanoate hydroxymethyltransferase (273 aa).

Mg(2+) is bound by residues aspartate 53 and aspartate 92. 3-methyl-2-oxobutanoate-binding positions include 53-54 (DS), aspartate 92, and lysine 120. Residue glutamate 122 participates in Mg(2+) binding. Glutamate 189 acts as the Proton acceptor in catalysis.

This sequence belongs to the PanB family. As to quaternary structure, homodecamer; pentamer of dimers. It depends on Mg(2+) as a cofactor.

It localises to the cytoplasm. It catalyses the reaction 3-methyl-2-oxobutanoate + (6R)-5,10-methylene-5,6,7,8-tetrahydrofolate + H2O = 2-dehydropantoate + (6S)-5,6,7,8-tetrahydrofolate. It participates in cofactor biosynthesis; (R)-pantothenate biosynthesis; (R)-pantoate from 3-methyl-2-oxobutanoate: step 1/2. Functionally, catalyzes the reversible reaction in which hydroxymethyl group from 5,10-methylenetetrahydrofolate is transferred onto alpha-ketoisovalerate to form ketopantoate. This Cupriavidus taiwanensis (strain DSM 17343 / BCRC 17206 / CCUG 44338 / CIP 107171 / LMG 19424 / R1) (Ralstonia taiwanensis (strain LMG 19424)) protein is 3-methyl-2-oxobutanoate hydroxymethyltransferase.